The sequence spans 286 residues: 33 kDa chaperonin (286 aa).

Cystine bridges form between Cys236/Cys238 and Cys264/Cys267.

Belongs to the HSP33 family. In terms of processing, under oxidizing conditions two disulfide bonds are formed involving the reactive cysteines. Under reducing conditions zinc is bound to the reactive cysteines and the protein is inactive.

Its subcellular location is the cytoplasm. In terms of biological role, redox regulated molecular chaperone. Protects both thermally unfolding and oxidatively damaged proteins from irreversible aggregation. Plays an important role in the bacterial defense system toward oxidative stress. In Carboxydothermus hydrogenoformans (strain ATCC BAA-161 / DSM 6008 / Z-2901), this protein is 33 kDa chaperonin.